A 654-amino-acid chain; its full sequence is Translation factor GUF1, mitochondrial (654 aa).

Positions 57–237 constitute a tr-type G domain; it reads ENYRNFSIVA…SVIKNIPSPV (181 aa). GTP-binding positions include 66-73, 130-134, and 184-187; these read AHVDHGKS, DTPGH, and NKID.

This sequence belongs to the TRAFAC class translation factor GTPase superfamily. Classic translation factor GTPase family. LepA subfamily.

Its subcellular location is the mitochondrion inner membrane. The catalysed reaction is GTP + H2O = GDP + phosphate + H(+). Functionally, promotes mitochondrial protein synthesis. May act as a fidelity factor of the translation reaction, by catalyzing a one-codon backward translocation of tRNAs on improperly translocated ribosomes. Binds to mitochondrial ribosomes in a GTP-dependent manner. The protein is Translation factor GUF1, mitochondrial of Candida dubliniensis (strain CD36 / ATCC MYA-646 / CBS 7987 / NCPF 3949 / NRRL Y-17841) (Yeast).